Here is a 355-residue protein sequence, read N- to C-terminus: N6-Methyl-AMP deaminase (355 aa).

The Zn(2+) site is built by H24 and H26. N(6)-methyl-AMP-binding positions include H26, N28, H74, 106 to 109, D148, and G181; that span reads STPR. H208 contacts Zn(2+). The N(6)-methyl-AMP site is built by E211, D293, and D294. Catalysis depends on E211, which acts as the Proton donor. D293 contributes to the Zn(2+) binding site.

The protein belongs to the metallo-dependent hydrolases superfamily. Adenosine and AMP deaminases family. Monomer. Zn(2+) serves as cofactor.

It carries out the reaction N(6)-methyl-AMP + H2O + H(+) = IMP + methylamine. In terms of biological role, catalyzes the hydrolysis of the free cytosolic methylated adenosine nucleotide N(6)-methyl-AMP (N6-mAMP) to produce inositol monophosphate (IMP) and methylamine. Is required for the catabolism of cytosolic N6-mAMP, which is derived from the degradation of mRNA containing N6-methylated adenine (m6A). Catalyzes the removal of different alkyl groups not only from N6-substituted purine or 2-aminopurine nucleoside monophosphates but also from O6-substituted compounds in vitro. This Homo sapiens (Human) protein is N6-Methyl-AMP deaminase.